The primary structure comprises 404 residues: Cytochrome b561 and DOMON domain-containing protein At2g04850 (404 aa).

An N-terminal signal peptide occupies residues 1–22; the sequence is MATLILSFLLLLLATKLPESLA. The DOMON domain maps to 43-173; it reads QQASIAWTYH…TKIHHVWNRG (131 aa). The 201-residue stretch at 180-380 folds into the Cytochrome b561 domain; it reads SPTIHPTTST…MEVNSWVVFC (201 aa). Residues 217-237 form a helical membrane-spanning segment; the sequence is VTHGVVNAISWGFLLPAGAVT. 2 residues coordinate heme b: His-219 and His-255. The chain crosses the membrane as a helical span at residues 256–276; it reads AAIQLTGFLLGTIGFSIGIVL. His-288 serves as a coordination point for heme b. The chain crosses the membrane as a helical span at residues 290 to 310; it reads SLGIATFTAAALQTLALLFRP. His-324 is a heme b binding site. Transmembrane regions (helical) follow at residues 326 to 346 and 359 to 379; these read FVGY…FEVL and LCLS…WVVF.

The cofactor is heme b.

It localises to the membrane. Functionally, may act as a catecholamine-responsive trans-membrane electron transporter. In Arabidopsis thaliana (Mouse-ear cress), this protein is Cytochrome b561 and DOMON domain-containing protein At2g04850.